A 178-amino-acid chain; its full sequence is MEQFHGTTIVSVRRGDKVALGGDGQVTLGNIVMKGGAKKVRRIYNNKVLVGFAGGTADAFSLLDRFEAKLEKHQGNLTRAAVELAKDWRTDRMLRRLEAMLITADATTTLVITGNGDVLDPEGGICAIGSGGAYAQAAAKALADNTDLSPREIVEKSLEIAGDMCIYTNHNRVIETIE.

Threonine 7 is a catalytic residue. Na(+)-binding residues include glycine 162, cysteine 165, and threonine 168.

This sequence belongs to the peptidase T1B family. HslV subfamily. In terms of assembly, a double ring-shaped homohexamer of HslV is capped on each side by a ring-shaped HslU homohexamer. The assembly of the HslU/HslV complex is dependent on binding of ATP.

The protein localises to the cytoplasm. It catalyses the reaction ATP-dependent cleavage of peptide bonds with broad specificity.. Its activity is regulated as follows. Allosterically activated by HslU binding. Functionally, protease subunit of a proteasome-like degradation complex believed to be a general protein degrading machinery. This is ATP-dependent protease subunit HslV from Paraburkholderia phymatum (strain DSM 17167 / CIP 108236 / LMG 21445 / STM815) (Burkholderia phymatum).